Here is a 64-residue protein sequence, read N- to C-terminus: uncharacterized protein (64 aa).

The next 2 helical transmembrane spans lie at Ile4–Tyr24 and Met35–Met55.

It localises to the cell membrane. This is an uncharacterized protein from Bacillus subtilis (strain 168).